Reading from the N-terminus, the 397-residue chain is MAKAKFERTKPHVNIGTIGHIDHGKTTLTAAITKVLHDQYPDLNPYMPFDEIDKAPEEKARGITISIAHVEYQTEARHYAHVDCPGHADYIKNMITGAAQMDGAILVVAATDGPMPQTREHVLLARQVGVPYIVVALNKSDMVDDEELLELVELEVRELLSSQEYPGDDLPVVRVSALKALEGDPEWAGKLMELMTAVDTSIPQPEREIEKPFLMPIEDVFTITGRGTVVTGRAERGVLKPNEEVELVGIREKSTKTTCTGIEMFRKLLDEARAGENVGLLLRGVKREDVERGMVVIKPGTATPHTEFEATVYILSKEEGGRHTPFFQNYRPQFYFRTTDVTGVVTLPEGTEMVMPGDNTTMTVKLIQPIAMEDNLKFAIREGGRTVGAGRVTKIIK.

The tr-type G domain maps to 10–206 (KPHVNIGTIG…AVDTSIPQPE (197 aa)). A G1 region spans residues 19-26 (GHIDHGKT). 19–26 (GHIDHGKT) is a GTP binding site. Thr-26 serves as a coordination point for Mg(2+). The tract at residues 62–66 (GITIS) is G2. Residues 83–86 (DCPG) form a G3 region. GTP contacts are provided by residues 83–87 (DCPGH) and 138–141 (NKSD). The segment at 138–141 (NKSD) is G4. The tract at residues 176–178 (SAL) is G5.

It belongs to the TRAFAC class translation factor GTPase superfamily. Classic translation factor GTPase family. EF-Tu/EF-1A subfamily. Monomer.

It is found in the cytoplasm. It catalyses the reaction GTP + H2O = GDP + phosphate + H(+). GTP hydrolase that promotes the GTP-dependent binding of aminoacyl-tRNA to the A-site of ribosomes during protein biosynthesis. The protein is Elongation factor Tu of Salinispora tropica (strain ATCC BAA-916 / DSM 44818 / JCM 13857 / NBRC 105044 / CNB-440).